The chain runs to 343 residues: Homeobox protein DBX1 (343 aa).

Disordered regions lie at residues 56-100 (RSVP…TAFS) and 240-343 (KERE…ITVS). A DNA-binding region (homeobox) is located at residues 181–240 (GMLRRAVFSDVQRKALEKMFQKQKYISKPDRKKLAAKLGLKDSQVKIWFQNRRMKWRNSK). The segment covering 314–323 (AHSSSPGKPS) has biased composition (low complexity). The span at 326 to 343 (SDSEEEEEGEEQEEITVS) shows a compositional bias: acidic residues.

It belongs to the H2.0 homeobox family.

The protein localises to the nucleus. Functionally, could have a role in patterning the central nervous system during embryogenesis. Has a key role in regulating the distinct phenotypic features that distinguish two major classes of ventral interneurons, V0 and V1 neurons. Regulates the transcription factor profile, neurotransmitter phenotype, intraspinal migratory path and axonal trajectory of V0 neurons, features that differentiate them from an adjacent set of V1 neurons. The sequence is that of Homeobox protein DBX1 (DBX1) from Homo sapiens (Human).